A 466-amino-acid chain; its full sequence is Xanthine permease XanQ (466 aa).

Topologically, residues 1–44 (MSDINHAGSDLIFELEDRPPFHQALVGAITHLLAIFVPMVTPAL) are cytoplasmic. A helical membrane pass occupies residues 45 to 65 (IVGAALQLSAETTAYLVSMAM). Residues 66–74 (IASGIGTWL) lie on the Periplasmic side of the membrane. The helical transmembrane segment at 75–95 (QVNRYGIVGSGLLSIQSVNFS) threads the bilayer. Residues 96–99 (FVTV) are Cytoplasmic-facing. The chain crosses the membrane as a helical span at residues 100–120 (MIALGSSMKSDGFHEELIMSS). Over 121–139 (LLGVSFVGAFLVVGSSFIL) the chain is Periplasmic. Residues 140 to 160 (PYLRRVITPTVSGIVVLMIGL) traverse the membrane as a helical segment. Residues 161–170 (SLIKVGIIDF) lie on the Cytoplasmic side of the membrane. A helical membrane pass occupies residues 171–191 (GGGFAAKSSGTFGNYEHLGVG). The Periplasmic portion of the chain corresponds to 192-199 (LLVLIVVI). The helical transmembrane segment at 200–220 (GFNCCRSPLLRMGGIAIGLCV) threads the bilayer. Topologically, residues 221 to 229 (GYIASLCLG) are cytoplasmic. Residues 230 to 250 (MVDFSSMRNLPLITIPHPFKY) form a helical membrane-spanning segment. Over 251–277 (GFSFSFHQFLVVGTIYLLSVLEAVGDI) the chain is Periplasmic. Residues 278–298 (TATAMVSRRPIQGEEYQSRLK) traverse the membrane as a helical segment. The Cytoplasmic segment spans residues 299–317 (GGVLADGLVSVIASAVGSL). Residues 318–338 (PLTTFAQNNGVIQMTGVASRY) form a helical membrane-spanning segment. At 339–361 (VGRTIAVMLVILGLFPMIGGFFT) the chain is on the periplasmic side. Residues 362–382 (TIPSAVLGGAMTLMFSMIAIA) form a helical membrane-spanning segment. Position 383 (Gly383) is a topological domain, cytoplasmic. The helical transmembrane segment at 384 to 403 (IRIIITNGLKRRETLIVATS) threads the bilayer. Over 404–444 (LGLGLGVSYDPEIFKILPASIYVLVENPICAGGLTAILLNI) the chain is Periplasmic. The chain crosses the membrane as a helical span at residues 445 to 465 (ILPGGYRQENVLPGITSAEEM). A topological domain (cytoplasmic) is located at residue Asp466.

This sequence belongs to the nucleobase:cation symporter-2 (NCS2) (TC 2.A.40) family.

Its subcellular location is the cell inner membrane. The catalysed reaction is xanthine(in) + H(+)(in) = xanthine(out) + H(+)(out). Functionally, specific, proton motive force-dependent high-affinity transporter for xanthine. The chain is Xanthine permease XanQ (xanQ) from Escherichia coli O157:H7.